The sequence spans 394 residues: RILP-like protein 1 (394 aa).

The region spanning 2 to 89 (EGISALEKNV…RLERMDRIEK (88 aa)) is the RH1 domain. Residues 68 to 312 (EMEELRLELD…KVFMLQEELA (245 aa)) adopt a coiled-coil conformation. The RH2 domain maps to 282 to 347 (RPRFTLQELR…IPQESGIKRL (66 aa)). The interval 318–337 (EADEEHKLPQSSPVIDSKAP) is disordered.

The protein belongs to the RILPL family.

The protein localises to the cytoplasm. The protein resides in the cytosol. It is found in the cytoskeleton. Its subcellular location is the microtubule organizing center. It localises to the centrosome. The protein localises to the cell projection. The protein resides in the cilium. In terms of biological role, plays a role in the regulation of cell shape and polarity. Plays a role in cellular protein transport, including protein transport away from primary cilia. Neuroprotective protein. The protein is RILP-like protein 1 (rilpl1) of Xenopus tropicalis (Western clawed frog).